The following is a 109-amino-acid chain: Sulredoxin (109 aa).

In terms of domain architecture, Rieske spans 3-107 (WKRTISAKAL…IRDNNGWIEV (105 aa)). C43, H45, C62, and H65 together coordinate [2Fe-2S] cluster.

Homooligomeric. [2Fe-2S] cluster is required as a cofactor.

It localises to the cytoplasm. In terms of biological role, not yet known. This Sulfurisphaera tokodaii (strain DSM 16993 / JCM 10545 / NBRC 100140 / 7) (Sulfolobus tokodaii) protein is Sulredoxin (sdx).